The sequence spans 207 residues: Cytochrome c biogenesis ATP-binding export protein CcmA (207 aa).

The ABC transporter domain maps to leucine 2–arginine 204. Glycine 34–threonine 41 is an ATP binding site.

The protein belongs to the ABC transporter superfamily. CcmA exporter (TC 3.A.1.107) family. As to quaternary structure, the complex is composed of two ATP-binding proteins (CcmA) and two transmembrane proteins (CcmB).

Its subcellular location is the cell membrane. The enzyme catalyses heme b(in) + ATP + H2O = heme b(out) + ADP + phosphate + H(+). Its function is as follows. Part of the ABC transporter complex CcmAB involved in the biogenesis of c-type cytochromes; once thought to export heme, this seems not to be the case, but its exact role is uncertain. Responsible for energy coupling to the transport system. In Wolbachia pipientis wMel, this protein is Cytochrome c biogenesis ATP-binding export protein CcmA.